We begin with the raw amino-acid sequence, 471 residues long: ATP synthase subunit beta (471 aa).

153–160 contacts ATP; the sequence is GGAGVGKT.

It belongs to the ATPase alpha/beta chains family. In terms of assembly, F-type ATPases have 2 components, CF(1) - the catalytic core - and CF(0) - the membrane proton channel. CF(1) has five subunits: alpha(3), beta(3), gamma(1), delta(1), epsilon(1). CF(0) has four main subunits: a(1), b(1), b'(1) and c(9-12).

Its subcellular location is the cell membrane. The catalysed reaction is ATP + H2O + 4 H(+)(in) = ADP + phosphate + 5 H(+)(out). Produces ATP from ADP in the presence of a proton gradient across the membrane. The catalytic sites are hosted primarily by the beta subunits. The polypeptide is ATP synthase subunit beta (Roseiflexus sp. (strain RS-1)).